Here is a 31-residue protein sequence, read N- to C-terminus: Scolopendra 4610.56 Da toxin (31 aa).

It belongs to the scolopendra toxin 1 family. Post-translationally, contains one or more disulfide bonds. As to expression, expressed by the venom gland.

Its subcellular location is the secreted. The sequence is that of Scolopendra 4610.56 Da toxin from Scolopendra viridicornis nigra (Brazilian giant centipede).